We begin with the raw amino-acid sequence, 325 residues long: Hydroxymethylglutaryl-CoA lyase, mitochondrial (325 aa).

The transit peptide at Met-1–Gly-27 directs the protein to the mitochondrion. Residues Val-33–Leu-300 form the Pyruvate carboxyltransferase domain. Arg-41 provides a ligand contact to substrate. Asp-42 contacts a divalent metal cation. Lys-48 is modified (N6-acetyllysine; alternate). Position 48 is an N6-succinyllysine; alternate (Lys-48). Lys-111 carries the post-translational modification N6-acetyllysine. An N6-acetyllysine; alternate mark is found at Lys-137 and Lys-179. 2 positions are modified to N6-succinyllysine; alternate: Lys-137 and Lys-179. A divalent metal cation is bound by residues His-233 and His-235. The active site involves Cys-266. An a divalent metal cation-binding site is contributed by Asn-275. The Microbody targeting signal signature appears at Cys-323–Leu-325. Position 324 is an N6-acetyllysine (Lys-324).

The protein belongs to the HMG-CoA lyase family. Homodimer; disulfide-linked. Can also form homotetramers.

It localises to the mitochondrion matrix. The protein localises to the peroxisome. It carries out the reaction (3S)-3-hydroxy-3-methylglutaryl-CoA = acetoacetate + acetyl-CoA. It functions in the pathway metabolic intermediate metabolism; (S)-3-hydroxy-3-methylglutaryl-CoA degradation; acetoacetate from (S)-3-hydroxy-3-methylglutaryl-CoA: step 1/1. Functionally, mitochondrial 3-hydroxy-3-methylglutaryl-CoA lyase that catalyzes a cation-dependent cleavage of (S)-3-hydroxy-3-methylglutaryl-CoA into acetyl-CoA and acetoacetate, a key step in ketogenesis. Terminal step in leucine catabolism. Ketone bodies (beta-hydroxybutyrate, acetoacetate and acetone) are essential as an alternative source of energy to glucose, as lipid precursors and as regulators of metabolism. The chain is Hydroxymethylglutaryl-CoA lyase, mitochondrial (HMGCL) from Bos taurus (Bovine).